The primary structure comprises 259 residues: Exosome complex component Rrp42 (259 aa).

It belongs to the RNase PH family. Rrp42 subfamily. In terms of assembly, component of the archaeal exosome complex. Forms a hexameric ring-like arrangement composed of 3 Rrp41-Rrp42 heterodimers. The hexameric ring associates with a trimer of Rrp4 and/or Csl4 subunits.

The protein resides in the cytoplasm. Functionally, non-catalytic component of the exosome, which is a complex involved in RNA degradation. Contributes to the structuring of the Rrp41 active site. The sequence is that of Exosome complex component Rrp42 from Archaeoglobus fulgidus (strain ATCC 49558 / DSM 4304 / JCM 9628 / NBRC 100126 / VC-16).